Here is a 243-residue protein sequence, read N- to C-terminus: 23S rRNA (guanosine-2'-O-)-methyltransferase RlmB (243 aa).

S-adenosyl-L-methionine contacts are provided by Gly-196, Ile-216, and Leu-225.

It belongs to the class IV-like SAM-binding methyltransferase superfamily. RNA methyltransferase TrmH family. RlmB subfamily. In terms of assembly, homodimer.

The protein resides in the cytoplasm. It carries out the reaction guanosine(2251) in 23S rRNA + S-adenosyl-L-methionine = 2'-O-methylguanosine(2251) in 23S rRNA + S-adenosyl-L-homocysteine + H(+). Functionally, specifically methylates the ribose of guanosine 2251 in 23S rRNA. The polypeptide is 23S rRNA (guanosine-2'-O-)-methyltransferase RlmB (Salmonella typhimurium (strain LT2 / SGSC1412 / ATCC 700720)).